The primary structure comprises 139 residues: Small ribosomal subunit protein uS12 (139 aa).

A disordered region spans residues 1–44 (MPTINQLVKKPRTSKVKKSTAPALNKGYNSHKKKATDLASPQKR). Over residues 9–18 (KKPRTSKVKK) the composition is skewed to basic residues. Aspartate 102 carries the post-translational modification 3-methylthioaspartic acid.

The protein belongs to the universal ribosomal protein uS12 family. In terms of assembly, part of the 30S ribosomal subunit. Contacts proteins S8 and S17. May interact with IF1 in the 30S initiation complex.

In terms of biological role, with S4 and S5 plays an important role in translational accuracy. Functionally, interacts with and stabilizes bases of the 16S rRNA that are involved in tRNA selection in the A site and with the mRNA backbone. Located at the interface of the 30S and 50S subunits, it traverses the body of the 30S subunit contacting proteins on the other side and probably holding the rRNA structure together. The combined cluster of proteins S8, S12 and S17 appears to hold together the shoulder and platform of the 30S subunit. This chain is Small ribosomal subunit protein uS12, found in Macrococcus caseolyticus (strain JCSC5402) (Macrococcoides caseolyticum).